The chain runs to 210 residues: Isochorismatase domain-containing protein 2B (210 aa).

N6-succinyllysine is present on Lys178.

It belongs to the isochorismatase family. Interacts with CDKN2A. Ubiquitous. Expressed predominantly in uterus, stomach and urinary tract.

The protein localises to the cytoplasm. It is found in the nucleus. The sequence is that of Isochorismatase domain-containing protein 2B (Isoc2b) from Mus musculus (Mouse).